Reading from the N-terminus, the 392-residue chain is V-type proton ATPase subunit C (392 aa).

At Ala2 the chain carries N-acetylalanine.

This sequence belongs to the V-ATPase C subunit family. V-ATPase is a heteromultimeric enzyme composed of a peripheral catalytic V1 complex (components A to H) attached to an integral membrane V0 proton pore complex (components: a, c, c', c'', d, e, f and VOA1). Interacts directly with VMA4.

It is found in the vacuole membrane. Its function is as follows. Subunit of the V1 complex of vacuolar(H+)-ATPase (V-ATPase), a multisubunit enzyme composed of a peripheral complex (V1) that hydrolyzes ATP and a membrane integral complex (V0) that translocates protons. V-ATPase is responsible for acidifying and maintaining the pH of intracellular compartments. Subunit C is necessary for the assembly of the catalytic sector of the enzyme and is likely to have a specific function in its catalytic activity. Reversibly leaves the enzyme after glucose depletion, causing the catalytic subcomplex V1 to detach from the V0 section. The polypeptide is V-type proton ATPase subunit C (Saccharomyces cerevisiae (strain ATCC 204508 / S288c) (Baker's yeast)).